Here is a 152-residue protein sequence, read N- to C-terminus: Toxin Res (152 aa).

Belongs to the MbcT/ParT/Res family. In terms of assembly, homodimer. Forms a complex with cognate antitoxin Xre.

Its function is as follows. Toxic component of a type II toxin-antitoxin (TA) system. Expression in E.coli inhibits cell growth; bacteriostasis is neutralized by expression of cognate antitoxin Xre. Probably depletes intracellular NAD(+). In Yersinia enterocolitica serotype O:8 / biotype 1B (strain NCTC 13174 / 8081), this protein is Toxin Res.